Here is a 435-residue protein sequence, read N- to C-terminus: MKKGIVAIVGRPNVGKSSLFNRIIREKKSIVEDTPGVTRDRIYGTAEWLTREFIVIDTGGITLEDQPFAKEIKVQAEIAMEEADVIVFLLNHQEGLSDEDKMIAKILYKTKKPIVLAVNKYDKKTSDFDQYEYMSLGFGEPILISATHGIGTGDLLDDIIHQMPSHEEINKDNRTRVSIIGRPNVGKSSLVNSLIGEERMIVSDIPGTTLDAVDSVVKVNNIEYTLIDTAGIRKKSKIFQNVEKYSYLRSLTTINGSDVVLLMLDASVPISDLDTNIGGLAFEEKKPIIIIANKWDLVENKEKEILKKEDEIRAYFKYLAYAKILFVSAHDKTRITKIFTAVEDIRTALDKKIKTSVFNEVLNKAQLINPAPNFNGGRLKIYYGAQVEAYLPTFVLFVNNPDYVHFSYKRFLENQIRLQFGFEGVPMSIIFRERK.

EngA-type G domains follow at residues 4–167 (GIVA…PSHE) and 175–350 (TRVS…TALD). GTP is bound by residues 10–17 (GRPNVGKS), 57–61 (DTGGI), 119–122 (NKYD), 181–188 (GRPNVGKS), 228–232 (DTAGI), and 293–296 (NKWD). In terms of domain architecture, KH-like spans 351 to 435 (KKIKTSVFNE…PMSIIFRERK (85 aa)).

It belongs to the TRAFAC class TrmE-Era-EngA-EngB-Septin-like GTPase superfamily. EngA (Der) GTPase family. In terms of assembly, associates with the 50S ribosomal subunit.

Its function is as follows. GTPase that plays an essential role in the late steps of ribosome biogenesis. In Mesoplasma florum (strain ATCC 33453 / NBRC 100688 / NCTC 11704 / L1) (Acholeplasma florum), this protein is GTPase Der.